We begin with the raw amino-acid sequence, 580 residues long: 2-succinyl-5-enolpyruvyl-6-hydroxy-3-cyclohexene-1-carboxylate synthase (580 aa).

The interval 178–199 (LEPTPMPGDLTEPPAAAQPRDD) is disordered.

It belongs to the TPP enzyme family. MenD subfamily. Homodimer. The cofactor is Mg(2+). Requires Mn(2+) as cofactor. Thiamine diphosphate serves as cofactor.

The catalysed reaction is isochorismate + 2-oxoglutarate + H(+) = 5-enolpyruvoyl-6-hydroxy-2-succinyl-cyclohex-3-ene-1-carboxylate + CO2. It participates in quinol/quinone metabolism; 1,4-dihydroxy-2-naphthoate biosynthesis; 1,4-dihydroxy-2-naphthoate from chorismate: step 2/7. Its pathway is quinol/quinone metabolism; menaquinone biosynthesis. In terms of biological role, catalyzes the thiamine diphosphate-dependent decarboxylation of 2-oxoglutarate and the subsequent addition of the resulting succinic semialdehyde-thiamine pyrophosphate anion to isochorismate to yield 2-succinyl-5-enolpyruvyl-6-hydroxy-3-cyclohexene-1-carboxylate (SEPHCHC). This chain is 2-succinyl-5-enolpyruvyl-6-hydroxy-3-cyclohexene-1-carboxylate synthase, found in Roseiflexus castenholzii (strain DSM 13941 / HLO8).